The sequence spans 700 residues: MEERTFEMELAGRKLLVQIGKVAQQANGAAWVKYGDTVVLVTACASKEPREGIDFFPLTVEYEERLYSVGKIPGGFIKREGKPSEKAILSARLIDRPIRPLFPHGYRNDVQVIATVLSVDPDVQPEIVAMIGSSVALSISDIPFNGPTGAVAVGLVDGQFIINPNHEQREKSLMHLVVSGTKDAIVMVEAGAKEIPEETMLDAIMYAHEYIKQIVEFIEGIVKEVGVPKSEVILHEIDKDLEEKVRAYATEKIYNALRTAEKKERNDNLDKVEQEVLEHFKEEYPDNLADIDEVLYNIMKEQMRKMITEERIRVDGRGLDDIRPIWCEVGVLPRTHGSAIFTRGQTQVLTVATLGALGDIQILDGIGDEEAKRYMHHYNFPPYSVGEVRPLRGPGRREIGHGALAERALEPVIPSEEEFPYTIRLVSEVLSSNGSTSQASVCGSTLALMDAGVPIKAPVAGVAMGLIKEGDVVSVLTDIQGIEDFLGDMDFKVAGTEKGITAIQMDIKIPGIDKEILKMALEKARRGRLYILSKMLEVIKEPRKQLSVYAPRVIRMVVDPEKIREIIGPGGKTISKIIAETGVKIDIEEDGRLYITASDLRSGERAKQMIEAITKDIAVGEIYLGKVLRITPFGAFVEIAPGKEGLVHISKLSKKRVQKVEDVVKVGDDILVKVTDIDKLGRISLSRKDALPDEEEEERN.

Residues D484 and D490 each coordinate Mg(2+). The 60-residue stretch at 551–610 (PRVIRMVVDPEKIREIIGPGGKTISKIIAETGVKIDIEEDGRLYITASDLRSGERAKQMI) folds into the KH domain. Residues 620–688 (GEIYLGKVLR…KLGRISLSRK (69 aa)) enclose the S1 motif domain.

Belongs to the polyribonucleotide nucleotidyltransferase family. Requires Mg(2+) as cofactor.

Its subcellular location is the cytoplasm. It catalyses the reaction RNA(n+1) + phosphate = RNA(n) + a ribonucleoside 5'-diphosphate. In terms of biological role, involved in mRNA degradation. Catalyzes the phosphorolysis of single-stranded polyribonucleotides processively in the 3'- to 5'-direction. The polypeptide is Polyribonucleotide nucleotidyltransferase (Thermoanaerobacter pseudethanolicus (strain ATCC 33223 / 39E) (Clostridium thermohydrosulfuricum)).